We begin with the raw amino-acid sequence, 87 residues long: MNSLLMITACLALVGTVWAKEGYLVNSYTGCKFECFKLGDNDYCLRECRQQYGKGSGGYCYAFGCWCTHLYEQAVVWPLPNKTCNGK.

The first 19 residues, 1–19 (MNSLLMITACLALVGTVWA), serve as a signal peptide directing secretion. The LCN-type CS-alpha/beta domain occupies 20–85 (KEGYLVNSYT…VWPLPNKTCN (66 aa)). 4 cysteine pairs are disulfide-bonded: C31–C84, C35–C60, C44–C65, and C48–C67. N85 bears the Asparagine amide mark.

Belongs to the long (4 C-C) scorpion toxin superfamily. Sodium channel inhibitor family. Beta subfamily. In terms of tissue distribution, expressed by the venom gland.

The protein resides in the secreted. Its function is as follows. Beta toxins bind voltage-independently at site-4 of sodium channels (Nav) and shift the voltage of activation toward more negative potentials thereby affecting sodium channel activation and promoting spontaneous and repetitive firing. This toxin is active only on mammals. The chain is Beta-mammal toxin Css4 from Centruroides suffusus (Durango bark scorpion).